A 496-amino-acid polypeptide reads, in one-letter code: Ganglioside-induced differentiation-associated protein 2 (496 aa).

Disordered stretches follow at residues 22 to 45 (VRDGEGEDVPDGGRKDAPHGGLHS) and 252 to 271 (PERQIRISEKPGGQDDDSEE). The region spanning 44–224 (HSPFPYRNDI…TYRRLLPLYF (181 aa)) is the Macro domain. Residues 254-264 (RQIRISEKPGG) show a composition bias toward basic and acidic residues. One can recognise a CRAL-TRIO domain in the interval 329–483 (DLSDIAALKA…FVLDYDAREN (155 aa)).

It belongs to the GDAP2 family.

The chain is Ganglioside-induced differentiation-associated protein 2 from Xenopus tropicalis (Western clawed frog).